The chain runs to 253 residues: Ubiquinone/menaquinone biosynthesis C-methyltransferase UbiE (253 aa).

S-adenosyl-L-methionine is bound by residues threonine 76, aspartate 97, 125 to 126, and serine 142; that span reads NA.

This sequence belongs to the class I-like SAM-binding methyltransferase superfamily. MenG/UbiE family.

It carries out the reaction a 2-demethylmenaquinol + S-adenosyl-L-methionine = a menaquinol + S-adenosyl-L-homocysteine + H(+). It catalyses the reaction a 2-methoxy-6-(all-trans-polyprenyl)benzene-1,4-diol + S-adenosyl-L-methionine = a 5-methoxy-2-methyl-3-(all-trans-polyprenyl)benzene-1,4-diol + S-adenosyl-L-homocysteine + H(+). Its pathway is quinol/quinone metabolism; menaquinone biosynthesis; menaquinol from 1,4-dihydroxy-2-naphthoate: step 2/2. The protein operates within cofactor biosynthesis; ubiquinone biosynthesis. Methyltransferase required for the conversion of demethylmenaquinol (DMKH2) to menaquinol (MKH2) and the conversion of 2-polyprenyl-6-methoxy-1,4-benzoquinol (DDMQH2) to 2-polyprenyl-3-methyl-6-methoxy-1,4-benzoquinol (DMQH2). This Xylella fastidiosa (strain 9a5c) protein is Ubiquinone/menaquinone biosynthesis C-methyltransferase UbiE.